We begin with the raw amino-acid sequence, 1023 residues long: Vacuolar membrane protease (1023 aa).

Over 1-80 (MRAAGCGGTG…FFRSVFGYRK (80 aa)) the chain is Cytoplasmic. A compositionally biased stretch (polar residues) spans 17–48 (KLSRSISQHQPKSMPQASVNSEQNPSVPNSPS). The interval 17 to 59 (KLSRSISQHQPKSMPQASVNSEQNPSVPNSPSAHKPARSQSAQ) is disordered. Residues 81 to 101 (TSLTFLVALVFAATLLLSWAD) traverse the membrane as a helical segment. Residues 102–425 (SSLDFSVDMP…VVFSVSQVVS (324 aa)) are Vacuolar-facing. N170 and N200 each carry an N-linked (GlcNAc...) asparagine glycan. The Zn(2+) site is built by H214 and D226. The active-site Proton acceptor is E259. The Zn(2+) site is built by E260, E285, and H357. Residues 426 to 446 (ANIALLVVVPVASLLLLFIIF) traverse the membrane as a helical segment. Over 447–461 (RCNKGWGFNFVNAIK) the chain is Cytoplasmic. The helical transmembrane segment at 462 to 482 (YPLSLVASVLVLTFVSQVIIV) threads the bilayer. The Vacuolar segment spans residues 483–491 (PSNPFLVNS). Residue N490 is glycosylated (N-linked (GlcNAc...) asparagine). A helical membrane pass occupies residues 492-512 (SIGLLVATLFSLFLLLNYIVL). The Cytoplasmic portion of the chain corresponds to 513-529 (NGLNLVFKSFKGHQHDE). A helical membrane pass occupies residues 530 to 550 (KLIVMCESSFLTWILLLWSTV). The Vacuolar portion of the chain corresponds to 551-564 (KLSHNKFGDDHTGE). A helical membrane pass occupies residues 565 to 585 (LFIPILFSLQAVACFLGFLGW). At 586-643 (CFKPSKKVKVSREEHQPLLSSNGSNYGTQDDDDSLAPSSSLSLQSGFSENCEVHETKS) the chain is on the cytoplasmic side. Over residues 604-613 (LSSNGSNYGT) the composition is skewed to polar residues. The interval 604-626 (LSSNGSNYGTQDDDDSLAPSSSL) is disordered. The chain crosses the membrane as a helical span at residues 644–664 (FSYDWLVQFLVIVPISSLIIF). Residues 665 to 687 (NSGSLILNGLNKSIQESLSAQNL) lie on the Vacuolar side of the membrane. N675 carries an N-linked (GlcNAc...) asparagine glycan. A helical transmembrane segment spans residues 688 to 708 (IYKFIQIFVIVWSIPFLPFIF). Residues 709–712 (KLNR) lie on the Cytoplasmic side of the membrane. A helical membrane pass occupies residues 713–733 (IIVLALSLVLLYGFFAVNITD). Residues 734-1023 (AFNDANPLKL…MVSVTKYIEV (290 aa)) are Vacuolar-facing. N-linked (GlcNAc...) asparagine glycosylation is found at N815, N858, and N892.

The protein belongs to the peptidase M28 family. Zn(2+) is required as a cofactor.

It localises to the vacuole membrane. Functionally, may be involved in vacuolar sorting and osmoregulation. This Clavispora lusitaniae (strain ATCC 42720) (Yeast) protein is Vacuolar membrane protease.